A 490-amino-acid chain; its full sequence is Probable cytosol aminopeptidase (490 aa).

Mn(2+) contacts are provided by Lys256 and Asp261. Residue Lys268 is part of the active site. Positions 280, 340, and 342 each coordinate Mn(2+). The active site involves Arg344.

It belongs to the peptidase M17 family. Requires Mn(2+) as cofactor.

The protein localises to the cytoplasm. The catalysed reaction is Release of an N-terminal amino acid, Xaa-|-Yaa-, in which Xaa is preferably Leu, but may be other amino acids including Pro although not Arg or Lys, and Yaa may be Pro. Amino acid amides and methyl esters are also readily hydrolyzed, but rates on arylamides are exceedingly low.. The enzyme catalyses Release of an N-terminal amino acid, preferentially leucine, but not glutamic or aspartic acids.. Presumably involved in the processing and regular turnover of intracellular proteins. Catalyzes the removal of unsubstituted N-terminal amino acids from various peptides. The protein is Probable cytosol aminopeptidase of Synechococcus sp. (strain CC9902).